The following is a 468-amino-acid chain: Putative ankyrin repeat protein R873 (468 aa).

14 ANK repeats span residues 38 to 68 (IKTD…KHNL), 78 to 107 (SLNE…DIEG), 109 to 137 (DNCA…NFRA), 138 to 167 (NNDK…DIRS), 169 to 197 (NDCS…NIRT), 198 to 227 (NDDW…DIRS), 229 to 257 (DDHA…NIIA), 258 to 287 (EDNY…NITS), 289 to 316 (YYTI…NIRD), 317 to 346 (CDSS…DFRE), 348 to 376 (DDLT…DFRV), 378 to 406 (DDYP…DVRA), 407 to 436 (EDDY…NIRA), and 438 to 466 (NDYA…VLNK).

The protein is Putative ankyrin repeat protein R873 of Acanthamoeba polyphaga mimivirus (APMV).